Here is a 1580-residue protein sequence, read N- to C-terminus: Adhesion G protein-coupled receptor L3 (1580 aa).

The first 19 residues, 1–19 (MWPSQLLVFMMLLAPIIHG), serve as a signal peptide directing secretion. Topologically, residues 20-949 (GKHSERHPAL…VHDLLLDVIT (930 aa)) are extracellular. The tract at residues 23-81 (SERHPALASPLRHAERGPGGALPPRHLLQQPAAERATAHRGPGPRGATRGVRGPGAHGA) is disordered. The SUEL-type lectin domain occupies 103–192 (SCESYPIELR…KYLEVQYECV (90 aa)). Intrachain disulfides connect cysteine 104-cysteine 134, cysteine 113-cysteine 191, cysteine 146-cysteine 178, cysteine 159-cysteine 165, and cysteine 203-cysteine 385. N-linked (GlcNAc...) asparagine glycosylation is present at asparagine 161. Positions 202 to 461 (LCPGLLKGVY…VVKYSLDFGP (260 aa)) constitute an Olfactomedin-like domain. An interaction with FLRT3 region spans residues 317-347 (YHDTSPYRWGGKSDIDLAVDENGLWVIYATE). The Ca(2+) site is built by aspartate 332, asparagine 380, alanine 381, and valine 435. The disordered stretch occupies residues 494 to 540 (EISTTGPLGTGSTTTSTTLRTTTWSPGRSTTPSVSGRRNRSTSTPSP). The segment covering 496 to 521 (STTGPLGTGSTTTSTTLRTTTWSPGR) has biased composition (low complexity). The segment covering 522–539 (STTPSVSGRRNRSTSTPS) has biased composition (polar residues). 6 N-linked (GlcNAc...) asparagine glycosylation sites follow: asparagine 532, asparagine 617, asparagine 827, asparagine 840, asparagine 885, and asparagine 911. In terms of domain architecture, GAIN-B spans 756-935 (DIVRENTDNI…AVLMAHVEVK (180 aa)). 2 cysteine pairs are disulfide-bonded: cysteine 886/cysteine 917 and cysteine 905/cysteine 919. The GPS stretch occupies residues 886–935 (CSFWSYSKRTMTGYWSTQGCRLLTTNKTHTTCSCNHLTNFAVLMAHVEVK). The stachel stretch occupies residues 923 to 939 (TNFAVLMAHVEVKHSDA). A helical membrane pass occupies residues 950 to 970 (WVGILLSLVCLLICIFTFCFF). The Cytoplasmic portion of the chain corresponds to 971–978 (RGLQSDRN). Residues 979–999 (TIHKNLCISLFVAELLFLIGI) traverse the membrane as a helical segment. A glycan (N-linked (GlcNAc...) asparagine) is linked at asparagine 1000. The Extracellular portion of the chain corresponds to 1000–1007 (NRTDQPIA). A helical transmembrane segment spans residues 1008 to 1028 (CAVFAALLHFFFLAAFTWMFL). The Cytoplasmic portion of the chain corresponds to 1029-1050 (EGVQLYIMLVEVFESEHSRRKY). The chain crosses the membrane as a helical span at residues 1051-1071 (FYLVGYGMPALIVAVSAAVDY). The Extracellular portion of the chain corresponds to 1072 to 1088 (RSYGTDKVCWLRLDTYF). A helical transmembrane segment spans residues 1089–1109 (IWSFIGPATLIIMLNVIFLGI). Topologically, residues 1110 to 1142 (ALYKMFHHTAILKPESGCLDNINYEDNRPFIKS) are cytoplasmic. The helical transmembrane segment at 1143–1163 (WVIGAIALLCLLGLTWAFGLM) threads the bilayer. Residues 1164 to 1169 (YINEST) are Extracellular-facing. An N-linked (GlcNAc...) asparagine glycan is attached at asparagine 1166. A helical membrane pass occupies residues 1170 to 1190 (VIMAYLFTIFNSLQGMFIFIF). Over 1191–1580 (HCVLQKKVRK…KGPAHLVTSL (390 aa)) the chain is Cytoplasmic. Residues 1213 to 1238 (GRSTESSIGSGKTSGSRTPGRYSTGS) form a disordered region. Position 1254 is a phosphoserine (serine 1254). The interval 1555–1580 (FIVPPNKDGTPPEGSSKGPAHLVTSL) is disordered. Residues 1575 to 1580 (HLVTSL) carry the PDZ-binding motif.

Belongs to the G-protein coupled receptor 2 family. LN-TM7 subfamily. In terms of assembly, heterodimer of 2 chains generated by proteolytic processing; the large extracellular N-terminal fragment and the membrane-bound C-terminal fragment predominantly remain associated and non-covalently linked. Interacts (via olfactomedin-like domain) with FLRT1 (via extracellular domain). Interacts (via olfactomedin-like domain) with FLRT2 (via extracellular domain). Interacts (via olfactomedin-like domain) with FLRT3 (via extracellular domain); the interaction is direct. Interacts (via extracellular domain) with TENM1. Interacts (via extracellular domain) with TENM2. Interacts (via extracellular domain) with TENM3. Identified in a complex with FLRT3 and UNC5B; does not interact with UNC5B by itself. Identified in a complex with FLRT3 and UNC5D; does not interact with UNC5D by itself. Interacts (via PDZ-binding motif) with SHANK3. Interacts (via PDZ-binding motif) with DLG4. Autoproteolytically processed at the GPS region of the GAIN-B domain; this cleavage modulates receptor activity. Brain-specific distribution but low levels are also detected in lung and spleen.

The protein resides in the cell membrane. It localises to the postsynaptic cell membrane. It is found in the cell projection. Its subcellular location is the axon. The protein localises to the cell junction. Forms a heterodimer of 2 chains generated by proteolytic processing that remain associated through non-covalent interactions mediated by the GAIN-B domain. In the inactivated receptor, the Stachel sequence (also named stalk) is embedded in the GAIN-B domain, where it adopts a beta-strand conformation. On activation, the Stachel moves into the 7 transmembrane region and adopts a twisted hook-shaped configuration that forms contacts within the receptor, leading to coupling of a G-alpha protein, which activates signaling. The cleaved GAIN-B and N-terminal domains can then dissociate from the rest of the receptor. Orphan adhesion G-protein coupled receptor (aGPCR), which mediates synapse specificity. Ligand binding causes a conformation change that triggers signaling via guanine nucleotide-binding proteins (G proteins) and modulates the activity of downstream effectors. ADGRL3 is coupled with different classes of G alpha proteins, such as G(12)/G(13), G(s), G(i) or G(q), depending on the context. Coupling to G(12)/G(13) G proteins, which mediates the activation Rho small GTPases is the most efficient. Following G-protein coupled receptor activation, associates with cell adhesion molecules that are expressed at the surface of adjacent cells to direct synapse specificity. Specifically mediates the establishment of Schaffer-collateral synapses formed by CA3-region axons on CA1-region pyramidal neurons in the hippocampus. Localizes to postsynaptic spines in excitatory synapses in the S.oriens and S.radiatum and interacts with presynaptic cell adhesion molecules FLRT3 and TENM2, promoting synapse formation. Plays a role in the development of glutamatergic synapses in the cortex. Important in determining the connectivity rates between the principal neurons in the cortex. In terms of biological role, orphan adhesion G-protein coupled receptor (aGPCR), which mediates synapse specificity. Ligand binding causes a conformation change that triggers signaling via guanine nucleotide-binding proteins (G proteins) and modulates the activity of downstream effectors, such as adenylate cyclase. Isoform 1 is specifically coupled to G(s) G proteins and mediates activation of adenylate cyclase activity. Following G-protein coupled receptor activation, undergoes liquid-liquid phase transition, associates with (1) cell adhesion molecules that are expressed at the surface of adjacent cells, as well as (2) PDZ-containing proteins, such as SHANK3 and DLG4, in the cytoplasm to direct synapse formation. This Bos taurus (Bovine) protein is Adhesion G protein-coupled receptor L3.